Here is a 160-residue protein sequence, read N- to C-terminus: Phosphopantetheine adenylyltransferase (160 aa).

Position 9 (Ser9) interacts with substrate. Residues 9–10 (SF) and His17 each bind ATP. Substrate-binding residues include Lys41, Leu73, and Lys87. ATP contacts are provided by residues 88–90 (GLR), Glu98, and 123–129 (YSYLSSS).

This sequence belongs to the bacterial CoaD family. In terms of assembly, homohexamer. The cofactor is Mg(2+).

It localises to the cytoplasm. The enzyme catalyses (R)-4'-phosphopantetheine + ATP + H(+) = 3'-dephospho-CoA + diphosphate. It functions in the pathway cofactor biosynthesis; coenzyme A biosynthesis; CoA from (R)-pantothenate: step 4/5. Functionally, reversibly transfers an adenylyl group from ATP to 4'-phosphopantetheine, yielding dephospho-CoA (dPCoA) and pyrophosphate. This chain is Phosphopantetheine adenylyltransferase, found in Clostridium tetani (strain Massachusetts / E88).